The following is a 701-amino-acid chain: Type 3 secretion system secretin (701 aa).

The first 21 residues, 1–21 (MRKALMWLPLLLIGLSPATWA), serve as a signal peptide directing secretion. A compositionally biased stretch (gly residues) spans 229–238 (RGNGLAGGGS). The segment at 229–252 (RGNGLAGGGSPDTPSLPMSSSGLD) is disordered. Residues 240 to 252 (DTPSLPMSSSGLD) show a composition bias toward polar residues.

It belongs to the bacterial secretin family. T3SS SctC subfamily. The core secretion machinery of the T3SS is composed of approximately 20 different proteins, including cytoplasmic components, a base, an export apparatus and a needle. This subunit is part of the base, which anchors the injectisome in the bacterial cell envelope. Forms a stable homooligomeric complex.

It localises to the cell outer membrane. Functionally, component of the type III secretion system (T3SS), also called injectisome, which is used to inject bacterial effector proteins into eukaryotic host cells. Forms a ring-shaped multimeric structure with an apparent central pore in the outer membrane. Involved in the secretion of a proteinaceous elicitor of the hypersensitivity response in plants. The chain is Type 3 secretion system secretin from Pseudomonas syringae pv. syringae.